We begin with the raw amino-acid sequence, 644 residues long: Protein ecdysoneless homolog (644 aa).

Disordered stretches follow at residues 430–449 (AVGKKESESVSKEEKEQNYD), 496–537 (LGPR…SLKG), 567–589 (QVEPVSQTTDNNSDEEDSGTGES), and 623–644 (QSMGVQLPDNTDHRPTSKPTKN). The segment covering 431–447 (VGKKESESVSKEEKEQN) has biased composition (basic and acidic residues). The segment at 439–644 (VSKEEKEQNY…HRPTSKPTKN (206 aa)) is transcription activation. An involved in nuclear export region spans residues 481–497 (ITFDADSFLNYFDKILG). The segment at 502–532 (ESDSDDLDDEDFECLDSDDDLDFETHEPGEE) is acidic region required for transactivation activity. 3 positions are modified to phosphoserine: Ser-503, Ser-505, and Ser-518. The span at 503–523 (SDSDDLDDEDFECLDSDDDLD) shows a compositional bias: acidic residues. Over residues 524–534 (FETHEPGEEAS) the composition is skewed to basic and acidic residues. The segment covering 567 to 577 (QVEPVSQTTDN) has biased composition (polar residues).

It belongs to the ECD family. As to quaternary structure, interacts with TP53, MDM2, TXNIP. Interacts (phosphorylated) with PIH1D1. Interacts with RUVBL1 mediating the PIH1D1-independent association with the R2TP complex. Interacts with RB1, RBL1 and RBL2; ECD competes with E2F1 for binding to hypophospshorylated RB1. Interacts with EP300. Interacts with DDX39A. Post-translationally, phosphorylated predominantly by CK2 on two serine-containing clusters; involved in cell cycle regulation activity. Highly expressed in muscle and heart. Over-expressed in pancreatic and breast cancers.

It localises to the cytoplasm. The protein resides in the nucleus. Its function is as follows. Regulator of p53/TP53 stability and function. Inhibits MDM2-mediated degradation of p53/TP53 possibly by cooperating in part with TXNIP. May be involved transcriptional regulation. In vitro has intrinsic transactivation activity enhanced by EP300. May be a transcriptional activator required for the expression of glycolytic genes. Involved in regulation of cell cycle progression. Proposed to disrupt Rb-E2F binding leading to transcriptional activation of E2F proteins. The cell cycle -regulating function may depend on its RUVBL1-mediated association with the R2TP complex. May play a role in regulation of pre-mRNA splicing. Participates together with DDX39A in mRNA nuclear export. The protein is Protein ecdysoneless homolog (ECD) of Homo sapiens (Human).